The following is a 273-amino-acid chain: Glutamate racemase (273 aa).

Substrate-binding positions include 9–10 and 41–42; these read DS and YG. Cys73 (proton donor/acceptor) is an active-site residue. 74 to 75 provides a ligand contact to substrate; that stretch reads NT. Cys183 functions as the Proton donor/acceptor in the catalytic mechanism. Position 184–185 (184–185) interacts with substrate; it reads TH.

This sequence belongs to the aspartate/glutamate racemases family.

It carries out the reaction L-glutamate = D-glutamate. Its pathway is cell wall biogenesis; peptidoglycan biosynthesis. Provides the (R)-glutamate required for cell wall biosynthesis. The sequence is that of Glutamate racemase from Shewanella oneidensis (strain ATCC 700550 / JCM 31522 / CIP 106686 / LMG 19005 / NCIMB 14063 / MR-1).